The following is a 1179-amino-acid chain: Integrin alpha-7 (1179 aa).

The N-terminal stretch at 1–33 is a signal peptide; sequence MARIPRCDFLRPPGIYYLITSLLAGLFLPPAIA. The Extracellular segment spans residues 34–1076; it reads FNLDVMGAIR…YLDPMAVVVE (1043 aa). 7 FG-GAP repeats span residues 38–103, 110–175, 185–238, 292–349, 350–411, 412–467, and 471–530; these read VMGA…ETDC, RGAN…IRDE, EGRP…SPDL, DRLT…ATRL, IPEV…HWAD, ISPL…GVVV, and QVLE…IDPR. Asn86 carries N-linked (GlcNAc...) asparagine glycosylation. Disulfide bonds link Cys94–Cys103, Cys140–Cys163, and Cys184–Cys197. Ca(2+) is bound by residues Asp372, Asn374, Asp376, Asp380, Asp434, Asn436, Asp438, Asp442, Asp492, Asp494, Asn496, Tyr498, and Asp500. 6 disulfide bridges follow: Cys539-Cys546, Cys552-Cys615, Cys681-Cys687, Cys781-Cys792, Cys939-Cys993, and Cys999-Cys1004. Residue Asn784 is glycosylated (N-linked (GlcNAc...) asparagine). Residues 952 to 961 show a composition bias toward basic and acidic residues; it reads SRDRRRRELG. Residues 952 to 978 form a disordered region; that stretch reads SRDRRRRELGQPEPQEPPEKVEPSTSW. N-linked (GlcNAc...) asparagine glycosylation is present at Asn988. N-linked (GlcNAc...) asparagine glycosylation is found at Asn1023 and Asn1043. The helical transmembrane segment at 1077-1102 threads the bilayer; the sequence is GVPWWVILLGVLAGLLVLALLVLLLW. Residues 1103-1179 lie on the Cytoplasmic side of the membrane; sequence KLGFFKRAKH…PDGHPVPATA (77 aa). The GFFKR motif signature appears at 1105 to 1109; that stretch reads GFFKR. The interval 1134 to 1153 is disordered; it reads KEEKTGTIQRSNWGNSQWEG. Polar residues predominate over residues 1139–1152; sequence GTIQRSNWGNSQWE. Repeat copies occupy residues 1155–1158, 1163–1166, and 1171–1174. Residues 1155–1174 are 3 X 4 AA repeats of D-X-H-P; that stretch reads DAHPILAADWHPELGPDGHP.

This sequence belongs to the integrin alpha chain family. Heterodimer of an alpha and a beta subunit. The alpha subunit is composed of a heavy and a light chain linked by a disulfide bond. Alpha-7 associates with beta-1. Interacts with COMP. Interacts (via C-terminus intracellular tail region) with CIB1; the interaction is stabilized/increased in a calcium- and magnesium-dependent manner. Post-translationally, ADP-ribosylated on at least two sites of the extracellular domain in skeletal myotubes (in vitro). In terms of processing, no proteolytic cleavage to produce the 70 kDa form is seen due to the presence of a Gly instead of an arginine residue at position 647. In terms of tissue distribution, isoforms containing segment X2 are found in adult heart, lung and skeletal muscle. Isoforms containing segment X1 are expressed in adult heart, lung and in proliferating skeletal myoblasts but not in adult skeletal muscle. Isoforms containing segment a are exclusively found in skeletal muscle. Isoforms containing segment B are widely expressed. In muscle fibers isoforms containing segment A and B are expressed at myotendinous and neuromuscular junctions; isoforms containing segment C are expressed at neuromuscular junctions and at extrasynaptic sites.

Its subcellular location is the membrane. Its function is as follows. Integrin alpha-7/beta-1 is the primary laminin receptor on skeletal myoblasts and adult myofibers. During myogenic differentiation, it may induce changes in the shape and mobility of myoblasts, and facilitate their localization at laminin-rich sites of secondary fiber formation. Involved in the maintenance of the myofibers cytoarchitecture as well as for their anchorage, viability and functional integrity. Mice carrying a ITGA7 null allele are viable and fertile, but show progressive muscular dystrophy starting soon after birth, but with a distinct variability in different muscle types. Required to promote contractile phenotype acquisition in differentiated airway smooth muscle (ASM) cells. Acts as a Schwann cell receptor for laminin-2. Acts as a receptor of COMP and mediates its effect on vascular smooth muscle cells (VSMCs) maturation. This Mus musculus (Mouse) protein is Integrin alpha-7 (Itga7).